Consider the following 147-residue polypeptide: Phosphoribosyl-AMP cyclohydrolase (147 aa).

Asp-91 provides a ligand contact to Mg(2+). A Zn(2+)-binding site is contributed by Cys-92. Mg(2+)-binding residues include Asp-93 and Asp-95. The Zn(2+) site is built by Cys-109 and Cys-116.

The protein belongs to the PRA-CH family. As to quaternary structure, homodimer. It depends on Mg(2+) as a cofactor. Requires Zn(2+) as cofactor.

It localises to the cytoplasm. The catalysed reaction is 1-(5-phospho-beta-D-ribosyl)-5'-AMP + H2O = 1-(5-phospho-beta-D-ribosyl)-5-[(5-phospho-beta-D-ribosylamino)methylideneamino]imidazole-4-carboxamide. The protein operates within amino-acid biosynthesis; L-histidine biosynthesis; L-histidine from 5-phospho-alpha-D-ribose 1-diphosphate: step 3/9. Its function is as follows. Catalyzes the hydrolysis of the adenine ring of phosphoribosyl-AMP. This Rhodopseudomonas palustris (strain BisB18) protein is Phosphoribosyl-AMP cyclohydrolase.